The primary structure comprises 151 residues: FUN14 domain-containing protein 1 (151 aa).

The YXXL motif lies at 14 to 17 (YEVL). Helical transmembrane passes span 44-64 (YSVATQIVMGGVSGWCAGFLF), 71-91 (AATAVGGGFLLLQIASHGGYI), and 130-150 (FIKKNIVVSGGFVGGFLLGLA).

It belongs to the FUN14 family.

The protein localises to the mitochondrion outer membrane. Acts as an activator of hypoxia-induced mitophagy, an important mechanism for mitochondrial quality control. This chain is FUN14 domain-containing protein 1 (fundc1), found in Xenopus tropicalis (Western clawed frog).